The chain runs to 240 residues: 2-C-methyl-D-erythritol 4-phosphate cytidylyltransferase (240 aa).

This sequence belongs to the IspD/TarI cytidylyltransferase family. IspD subfamily.

The catalysed reaction is 2-C-methyl-D-erythritol 4-phosphate + CTP + H(+) = 4-CDP-2-C-methyl-D-erythritol + diphosphate. It participates in isoprenoid biosynthesis; isopentenyl diphosphate biosynthesis via DXP pathway; isopentenyl diphosphate from 1-deoxy-D-xylulose 5-phosphate: step 2/6. Catalyzes the formation of 4-diphosphocytidyl-2-C-methyl-D-erythritol from CTP and 2-C-methyl-D-erythritol 4-phosphate (MEP). This Chlorobium luteolum (strain DSM 273 / BCRC 81028 / 2530) (Pelodictyon luteolum) protein is 2-C-methyl-D-erythritol 4-phosphate cytidylyltransferase.